We begin with the raw amino-acid sequence, 236 residues long: Homeobox protein notochord (236 aa).

The homeobox DNA-binding region spans 138–197 (MKRIRTVFTPEQLEKLEKEFLKQQYMVGTERVDLASTLNLTETQVKVWFQNRRIKWRKQS). The interval 209–236 (GVIPADSSDHTDDSRETEEDEDDLDVEL) is disordered. Residues 223–236 (RETEEDEDDLDVEL) are compositionally biased toward acidic residues.

As to expression, expressed throughout the embryo during pre-gastrula stages. Localized to the dorsal lip of the blastopore (Spemann organizer) during early gastrulation, after which expression continues in tissues derived from the organizer. Expressed in the notochord during mid-gastrulation. During neurulation, expressed in the notochord, archenteron roof and the prospective floor plate. Also expressed in the region that will become the epiphysis, the pineal body precursor. By the early tailbud stages, expression is limited to posterior notochord and floor plate before becoming restricted to the tip of the tail in the tadpole.

It localises to the nucleus. Transcriptional repressor. Plays a fundamental role in notochord formation, acting within the mesodermal region. The polypeptide is Homeobox protein notochord (noto) (Xenopus laevis (African clawed frog)).